The primary structure comprises 282 residues: Large ribosomal subunit protein uL2 (282 aa).

Disordered regions lie at residues 26-55 (KKSP…RHRG) and 218-266 (PHVR…HNKS). Polar residues predominate over residues 34-43 (LESQSHTAGR). Residues 254–266 (TIGKKTRNKHNKS) show a composition bias toward basic residues.

Belongs to the universal ribosomal protein uL2 family. In terms of assembly, part of the 50S ribosomal subunit. Forms a bridge to the 30S subunit in the 70S ribosome.

In terms of biological role, one of the primary rRNA binding proteins. Required for association of the 30S and 50S subunits to form the 70S ribosome, for tRNA binding and peptide bond formation. It has been suggested to have peptidyltransferase activity; this is somewhat controversial. Makes several contacts with the 16S rRNA in the 70S ribosome. This is Large ribosomal subunit protein uL2 from Pediococcus pentosaceus (strain ATCC 25745 / CCUG 21536 / LMG 10740 / 183-1w).